Here is an 883-residue protein sequence, read N- to C-terminus: Alanine--tRNA ligase (883 aa).

Positions 565, 569, 675, and 679 each coordinate Zn(2+).

It belongs to the class-II aminoacyl-tRNA synthetase family. It depends on Zn(2+) as a cofactor.

The protein localises to the cytoplasm. It catalyses the reaction tRNA(Ala) + L-alanine + ATP = L-alanyl-tRNA(Ala) + AMP + diphosphate. Its function is as follows. Catalyzes the attachment of alanine to tRNA(Ala) in a two-step reaction: alanine is first activated by ATP to form Ala-AMP and then transferred to the acceptor end of tRNA(Ala). Also edits incorrectly charged Ser-tRNA(Ala) and Gly-tRNA(Ala) via its editing domain. This is Alanine--tRNA ligase from Rhodospirillum rubrum (strain ATCC 11170 / ATH 1.1.1 / DSM 467 / LMG 4362 / NCIMB 8255 / S1).